A 146-amino-acid polypeptide reads, in one-letter code: Large ribosomal subunit protein uL15 (146 aa).

The span at 1–13 shows a compositional bias: basic and acidic residues; the sequence is MKLHELKPAEGSR. A disordered region spans residues 1 to 59; the sequence is MKLHELKPAEGSRKVRNRVGRGTSSGNGKTSGRGQKGQKARSGGGVRLGFEGGQTPLFR. 2 stretches are compositionally biased toward gly residues: residues 23–35 and 42–52; these read TSSG…GRGQ and SGGGVRLGFEG.

This sequence belongs to the universal ribosomal protein uL15 family. Part of the 50S ribosomal subunit.

Its function is as follows. Binds to the 23S rRNA. The polypeptide is Large ribosomal subunit protein uL15 (Streptococcus agalactiae serotype Ia (strain ATCC 27591 / A909 / CDC SS700)).